The sequence spans 250 residues: L-ascorbate peroxidase 1, cytosolic (250 aa).

The active-site Proton acceptor is the histidine 42. The segment at 113 to 137 (VPFHPGREDKPAPPPEGRLPDATKG) is disordered. Heme b is bound at residue histidine 163. Residues threonine 164, threonine 180, asparagine 182, and aspartate 187 each contribute to the K(+) site.

Belongs to the peroxidase family. Ascorbate peroxidase subfamily. Heme b serves as cofactor. Expressed in roots, aerial vegetative parts and reproductive organs. Expressed in roots, leaves, stems and flowers.

It is found in the cytoplasm. It catalyses the reaction L-ascorbate + H2O2 = L-dehydroascorbate + 2 H2O. With respect to regulation, inhibited by p-chloromercuriphenylsulfonic acid (CMPSA). Plays a key role in hydrogen peroxide removal. The protein is L-ascorbate peroxidase 1, cytosolic of Oryza sativa subsp. japonica (Rice).